A 67-amino-acid polypeptide reads, in one-letter code: Penaeidin-4c (67 aa).

An N-terminal signal peptide occupies residues M1–G19. Cystine bridges form between C42/C56, C45/C63, and C57/C64. Position 66 is an arginine amide (R66).

The protein belongs to the penaeidin family.

It localises to the cytoplasmic granule. Its function is as follows. Antibacterial and antifungal activity. Presents chitin-binding activity. This is Penaeidin-4c from Penaeus vannamei (Whiteleg shrimp).